The following is a 384-amino-acid chain: Histone acetyltransferase type B subunit 2 (384 aa).

WD repeat units lie at residues 156–196 (GHSA…SSIS), 203–243 (RHET…CIHA), 247–287 (AHTS…QPLH), 291–331 (GHSK…AEVP), and 348–384 (GHTSTVCDISWNPAEPFEIASVSEDNILQIWQMPQPE).

Belongs to the WD repeat RBAP46/RBAP48/MSI1 family. As to quaternary structure, component of the HAT-B complex.

The protein localises to the cytoplasm. Its subcellular location is the nucleus. Its function is as follows. Regulatory subunit of the histone acetylase B (HAT-B) complex. The complex acetylates histone H4 which is required for telomeric silencing. The sequence is that of Histone acetyltransferase type B subunit 2 (HAT2) from Encephalitozoon cuniculi (strain GB-M1) (Microsporidian parasite).